A 297-amino-acid polypeptide reads, in one-letter code: Protoheme IX farnesyltransferase (297 aa).

The next 9 helical transmembrane spans lie at 23 to 43, 49 to 69, 93 to 113, 117 to 137, 144 to 164, 171 to 191, 215 to 235, 238 to 258, and 275 to 295; these read VTQL…PGMP, VFGT…NCLI, IQVL…LYHL, LTMW…TVIL, NIVI…AAVA, AWVL…ALAL, RLHI…PYAI, SGAL…WYAW, and FSIL…WVGL.

The protein belongs to the UbiA prenyltransferase family. Protoheme IX farnesyltransferase subfamily.

It is found in the cell inner membrane. The catalysed reaction is heme b + (2E,6E)-farnesyl diphosphate + H2O = Fe(II)-heme o + diphosphate. Its pathway is porphyrin-containing compound metabolism; heme O biosynthesis; heme O from protoheme: step 1/1. Converts heme B (protoheme IX) to heme O by substitution of the vinyl group on carbon 2 of heme B porphyrin ring with a hydroxyethyl farnesyl side group. The polypeptide is Protoheme IX farnesyltransferase (Bordetella bronchiseptica (strain ATCC BAA-588 / NCTC 13252 / RB50) (Alcaligenes bronchisepticus)).